The sequence spans 368 residues: tRNA-specific 2-thiouridylase MnmA (368 aa).

ATP contacts are provided by residues 11-18 (GMSGGVDS) and methionine 37. The segment at 97–99 (NPD) is interaction with target base in tRNA. Cysteine 102 functions as the Nucleophile in the catalytic mechanism. Cysteines 102 and 199 form a disulfide. ATP is bound at residue glycine 127. The segment at 149–151 (KDQ) is interaction with tRNA. Cysteine 199 acts as the Cysteine persulfide intermediate in catalysis. Residues 311-312 (RY) form an interaction with tRNA region.

Belongs to the MnmA/TRMU family. Interacts with TusE.

It localises to the cytoplasm. The catalysed reaction is S-sulfanyl-L-cysteinyl-[protein] + uridine(34) in tRNA + AH2 + ATP = 2-thiouridine(34) in tRNA + L-cysteinyl-[protein] + A + AMP + diphosphate + H(+). Functionally, catalyzes the 2-thiolation of uridine at the wobble position (U34) of tRNA(Lys), tRNA(Glu) and tRNA(Gln), leading to the formation of s(2)U34, the first step of tRNA-mnm(5)s(2)U34 synthesis. Sulfur is provided by IscS, via a sulfur-relay system. Binds ATP and its substrate tRNAs. This is tRNA-specific 2-thiouridylase MnmA from Citrobacter koseri (strain ATCC BAA-895 / CDC 4225-83 / SGSC4696).